The chain runs to 597 residues: Elongation factor 4 (597 aa).

In terms of domain architecture, tr-type G spans 2-184 (KNIRNFSIIA…EIVAKIPAPT (183 aa)). Residues 14 to 19 (DHGKST) and 131 to 134 (NKID) each bind GTP.

This sequence belongs to the TRAFAC class translation factor GTPase superfamily. Classic translation factor GTPase family. LepA subfamily.

Its subcellular location is the cell inner membrane. The catalysed reaction is GTP + H2O = GDP + phosphate + H(+). Required for accurate and efficient protein synthesis under certain stress conditions. May act as a fidelity factor of the translation reaction, by catalyzing a one-codon backward translocation of tRNAs on improperly translocated ribosomes. Back-translocation proceeds from a post-translocation (POST) complex to a pre-translocation (PRE) complex, thus giving elongation factor G a second chance to translocate the tRNAs correctly. Binds to ribosomes in a GTP-dependent manner. The chain is Elongation factor 4 from Neisseria meningitidis serogroup C / serotype 2a (strain ATCC 700532 / DSM 15464 / FAM18).